A 203-amino-acid chain; its full sequence is N-(5'-phosphoribosyl)anthranilate isomerase (203 aa).

The protein belongs to the TrpF family.

It carries out the reaction N-(5-phospho-beta-D-ribosyl)anthranilate = 1-(2-carboxyphenylamino)-1-deoxy-D-ribulose 5-phosphate. The protein operates within amino-acid biosynthesis; L-tryptophan biosynthesis; L-tryptophan from chorismate: step 3/5. In Caldanaerobacter subterraneus subsp. tengcongensis (strain DSM 15242 / JCM 11007 / NBRC 100824 / MB4) (Thermoanaerobacter tengcongensis), this protein is N-(5'-phosphoribosyl)anthranilate isomerase.